The chain runs to 126 residues: Urease subunit beta (126 aa).

The protein belongs to the urease beta subunit family. As to quaternary structure, heterotrimer of UreA (gamma), UreB (beta) and UreC (alpha) subunits. Three heterotrimers associate to form the active enzyme.

The protein localises to the cytoplasm. It carries out the reaction urea + 2 H2O + H(+) = hydrogencarbonate + 2 NH4(+). It functions in the pathway nitrogen metabolism; urea degradation; CO(2) and NH(3) from urea (urease route): step 1/1. This chain is Urease subunit beta, found in Haloquadratum walsbyi (strain DSM 16790 / HBSQ001).